Here is a 786-residue protein sequence, read N- to C-terminus: Mitochondrial intermediate peptidase (786 aa).

A mitochondrion-targeting transit peptide spans 1–29; that stretch reads MSSILLRSYRHHAKVWTRPSSKSSFIRSL. A Zn(2+)-binding site is contributed by histidine 567. Glutamate 568 is a catalytic residue. The Zn(2+) site is built by histidine 571 and histidine 574.

This sequence belongs to the peptidase M3 family. The cofactor is Zn(2+).

The protein resides in the mitochondrion matrix. It catalyses the reaction Release of an N-terminal octapeptide as second stage of processing of some proteins imported into the mitochondrion.. Functionally, cleaves proteins, imported into the mitochondrion, to their mature size. While most mitochondrial precursor proteins are processed to the mature form in one step by mitochondrial processing peptidase (MPP), the sequential cleavage by MIP of an octapeptide after initial processing by MPP is a required step for a subgroup of nuclear-encoded precursor proteins destined for the matrix or the inner membrane. The sequence is that of Mitochondrial intermediate peptidase (OCT1) from Meyerozyma guilliermondii (strain ATCC 6260 / CBS 566 / DSM 6381 / JCM 1539 / NBRC 10279 / NRRL Y-324) (Yeast).